The following is a 309-amino-acid chain: DNA replication terminus site-binding protein (309 aa).

This sequence belongs to the Tus family.

The protein localises to the cytoplasm. In terms of biological role, trans-acting protein required for termination of DNA replication. Binds to DNA replication terminator sequences (terA to terF) to prevent the passage of replication forks. The termination efficiency will be affected by the affinity of this protein for the terminator sequence. This is DNA replication terminus site-binding protein from Yersinia enterocolitica serotype O:8 / biotype 1B (strain NCTC 13174 / 8081).